A 275-amino-acid polypeptide reads, in one-letter code: uncharacterized protein (275 aa).

Residues 171-268 (KMVCEFLEEH…GLTPKQYMKI (98 aa)) enclose the HTH araC/xylS-type domain. 2 DNA-binding regions (H-T-H motif) span residues 188–209 (NDLS…TKQK) and 235–258 (PIDA…KRQV).

This is an uncharacterized protein from Bacillus subtilis (strain 168).